Here is a 140-residue protein sequence, read N- to C-terminus: Thioredoxin M-type, chloroplastic (140 aa).

The transit peptide at 1–34 directs the protein to the chloroplast; the sequence is MALVARRAAVPSARSSARPAFARAAPRRSVVVRA. Positions 35–140 constitute a Thioredoxin domain; sequence EAGAVNDDTF…IVQTVEKYLN (106 aa). Residues Cys-64 and Cys-67 each act as nucleophile in the active site. Residues Cys-64 and Cys-67 are joined by a disulfide bond.

The protein belongs to the thioredoxin family. Plant M-type subfamily. Forms a complex with heterodimeric ferredoxin-thioredoxin reductase (FTR) and ferredoxin.

It localises to the plastid. Its subcellular location is the chloroplast. In terms of biological role, participates in various redox reactions through the reversible oxidation of the active center dithiol to a disulfide. The M form is known to activate NADP-malate dehydrogenase. The protein is Thioredoxin M-type, chloroplastic (TRXM) of Chlamydomonas reinhardtii (Chlamydomonas smithii).